Here is a 492-residue protein sequence, read N- to C-terminus: Ferruginol synthase (492 aa).

The chain crosses the membrane as a helical span at residues 1 to 21 (METIALLAALFFIALTCFLTS). The Cytoplasmic portion of the chain corresponds to 22–492 (GRRRNLPPGP…VPLKIIPLRP (471 aa)). C436 lines the heme pocket.

The protein belongs to the cytochrome P450 family. Requires heme as cofactor.

The protein resides in the endoplasmic reticulum membrane. It catalyses the reaction abieta-8,11,13-triene + reduced [NADPH--hemoprotein reductase] + O2 = ferruginol + oxidized [NADPH--hemoprotein reductase] + H2O + H(+). It participates in secondary metabolite biosynthesis; terpenoid biosynthesis. Its function is as follows. Cytochrome P450 enzyme (CYP) which catalyzes a unique two-electron oxidation cascade on abieta-8,11,13-triene to produce ferruginol, an intermediate in tanshinone biosynthesis. The sequence is that of Ferruginol synthase from Isodon rubescens (Rabdosia rubescens).